The following is a 553-amino-acid chain: Protein DA1-related 1 (553 aa).

Residues 10–41 (GSSHKFSDGQCNGRYREDRNLEGPRYSAEGSD) form a disordered region. The UIM 1 domain occupies 42–61 (FDKEEIECAIALSLSEQEHV). A compositionally biased stretch (basic and acidic residues) spans 62–77 (IPQDDKGKKIIEYKSE). The interval 62 to 91 (IPQDDKGKKIIEYKSETEEDDDDDEDEDEE) is disordered. Residues 78–91 (TEEDDDDDEDEDEE) are compositionally biased toward acidic residues. The region spanning 87–106 (DEDEEYMRAQLEAAEEEERR) is the UIM 2 domain. The region spanning 122 to 141 (AQLEETEKLLAKARLEEEEM) is the UIM 3; degenerate domain. A UIM 4 domain is found at 149–168 (EEDELLAKALQESMNVGSPP). Ser166 bears the Phosphoserine mark. One can recognise an LIM zinc-binding domain in the interval 188–248 (RICVGCQAEI…KLCYKEQHHP (61 aa)).

Interacts with ubiquitin, TCP14 and TCP15. Polyubiquitinated by DA2.

Functionally, acts redundantly with DA1 and DAR2 to regulate endoreduplication during leaf development. Together with DA1 and DAR2, modulates the protein stability of the transcription factors TCP14 and TCP15, which repress endoreduplication by directly regulating the expression of cell-cycle genes. In Arabidopsis thaliana (Mouse-ear cress), this protein is Protein DA1-related 1.